We begin with the raw amino-acid sequence, 367 residues long: Peptide chain release factor 2 (367 aa).

At Gln254 the chain carries N5-methylglutamine.

The protein belongs to the prokaryotic/mitochondrial release factor family. Post-translationally, methylated by PrmC. Methylation increases the termination efficiency of RF2.

It is found in the cytoplasm. Peptide chain release factor 2 directs the termination of translation in response to the peptide chain termination codons UGA and UAA. This chain is Peptide chain release factor 2, found in Leptospira borgpetersenii serovar Hardjo-bovis (strain JB197).